Reading from the N-terminus, the 953-residue chain is 26S proteasome non-ATPase regulatory subunit 1 (953 aa).

An N-acetylmethionine; partial modification is found at methionine 1. Threonine 273 is subject to Phosphothreonine. A disordered region spans residues 279–318 (PGSTNTGTVPGSEKDSDSMETEEKTGSAFVGKTPEASPEP). Position 290 is a phosphoserine (serine 290). Basic and acidic residues predominate over residues 290-303 (SEKDSDSMETEEKT). Lysine 310 is subject to N6-acetyllysine. At threonine 311 the chain carries Phosphothreonine. Serine 315 bears the Phosphoserine mark. PC repeat units follow at residues 403–436 (TATASLGVIHKGHEKEALQLMATYLPKDTSPGSA), 441–474 (GGLYALGLIHANHGGDIIDYLLNQLKNASNDIVR), 476–510 (GGSLGLGLAAMGTARQDVYDLLKTNLYQDDAVTGE), 511–545 (AAGLALGLVMLGSKNAQAIEDMVGYAQETQHEKIL), 547–580 (GLAVGIALVMYGRMEEADALIESLCRDKDPILRR), 581–616 (SGMYTVAMAYCGSGNNKAIRRLLHVAVSDVNDDVRR), 617–649 (AAVESLGFILFRTPEQCPSVVSLLSESYNPHVR), 651–685 (GAAMALGICCAGTGNKEAINLLEPMTNDPVNYVRQ), 686–726 (GALI…DVMA), and 729–761 (GAILAQGILDAGGHNVTISLQSRTGHTHMPSVV). Residue lysine 720 is modified to N6-acetyllysine. Threonine 830 carries the phosphothreonine modification. Position 834 is a phosphoserine (serine 834). Disordered regions lie at residues 839 to 881 (AKKK…LDNP) and 930 to 953 (AHGPKIEEEEQEPEPPEPFEYIDD). Basic and acidic residues-rich tracts occupy residues 842–852 (KEKEKEKKEEE) and 859–872 (AEKKEEKEKKKEPE). A compositionally biased stretch (acidic residues) spans 936–953 (EEEEQEPEPPEPFEYIDD).

Belongs to the proteasome subunit S1 family. Component of the 19S proteasome regulatory particle complex. The 26S proteasome consists of a 20S core particle (CP) and two 19S regulatory subunits (RP). The regulatory particle is made of a lid composed of 9 subunits, a base containing 6 ATPases and few additional components including PSMD1. Interacts with ADRM1. Interacts with ZFAND1.

Component of the 26S proteasome, a multiprotein complex involved in the ATP-dependent degradation of ubiquitinated proteins. This complex plays a key role in the maintenance of protein homeostasis by removing misfolded or damaged proteins, which could impair cellular functions, and by removing proteins whose functions are no longer required. Therefore, the proteasome participates in numerous cellular processes, including cell cycle progression, apoptosis, or DNA damage repair. The chain is 26S proteasome non-ATPase regulatory subunit 1 (PSMD1) from Pongo abelii (Sumatran orangutan).